We begin with the raw amino-acid sequence, 568 residues long: General O-oligosaccharyltransferase (568 aa).

12 consecutive transmembrane segments (helical) span residues 17–37, 46–66, 78–98, 101–121, 132–152, 176–196, 214–234, 251–271, 349–369, 376–396, 397–417, and 429–449; these read VAVM…LAWL, LTFA…ALFL, LALP…VVDF, ALLS…GYNL, FTLS…IACI, FAQP…CLYL, IVFA…LFFI, YAVL…PRFT, LLVW…LIWI, AKTT…IHTL, LEYP…MGLI, and VPVS…ALIW.

This sequence belongs to the PglL O-oligosaccharyltransferase family.

The protein resides in the cell membrane. Its function is as follows. Catalyzes the O-glycosylation of multiple protein targets. Is responsible for general protein glycosylation within A.baylyi ADP1. Does not act as an O-antigen ligase. The chain is General O-oligosaccharyltransferase from Acinetobacter baylyi (strain ATCC 33305 / BD413 / ADP1).